The sequence spans 427 residues: G2/mitotic-specific cyclin-3 (427 aa).

Residues 1-12 (MHHNSQSLSSGH) show a composition bias toward polar residues. 2 disordered regions span residues 1–29 (MHHN…NLKH) and 89–126 (SVAQ…EDQE). Over residues 89–105 (SVAQRKEADHNDLLTDR) the composition is skewed to basic and acidic residues. Acidic residues predominate over residues 106-126 (EQEEPVEDDGESEEDEEEDQE).

This sequence belongs to the cyclin family. Cyclin AB subfamily.

In terms of biological role, essential for the control of the cell cycle at the G2/M (mitosis) transition. Interacts with the CDC2 protein kinase to form MPF. G2/M cyclins accumulate steadily during G2 and are abruptly destroyed at mitosis. The chain is G2/mitotic-specific cyclin-3 (CLB3) from Saccharomyces cerevisiae (strain ATCC 204508 / S288c) (Baker's yeast).